The following is a 662-amino-acid chain: DNA ligase (662 aa).

NAD(+) is bound by residues 31 to 35 and 79 to 80; these read DKDYD and SL. The active-site N6-AMP-lysine intermediate is K121. NAD(+) contacts are provided by R143, E177, and K313. Zn(2+) is bound by residues C406, C409, C422, and C428. The BRCT domain occupies 586-662; it reads VLESPFMGKT…LSEEEFENMI (77 aa).

Belongs to the NAD-dependent DNA ligase family. LigA subfamily. The cofactor is Mg(2+). It depends on Mn(2+) as a cofactor.

It carries out the reaction NAD(+) + (deoxyribonucleotide)n-3'-hydroxyl + 5'-phospho-(deoxyribonucleotide)m = (deoxyribonucleotide)n+m + AMP + beta-nicotinamide D-nucleotide.. DNA ligase that catalyzes the formation of phosphodiester linkages between 5'-phosphoryl and 3'-hydroxyl groups in double-stranded DNA using NAD as a coenzyme and as the energy source for the reaction. It is essential for DNA replication and repair of damaged DNA. This chain is DNA ligase, found in Clostridium perfringens (strain ATCC 13124 / DSM 756 / JCM 1290 / NCIMB 6125 / NCTC 8237 / Type A).